The chain runs to 411 residues: Citrate synthase (411 aa).

Active-site residues include His-304 and Asp-363.

The protein belongs to the citrate synthase family.

It carries out the reaction oxaloacetate + acetyl-CoA + H2O = citrate + CoA + H(+). The protein operates within carbohydrate metabolism; tricarboxylic acid cycle; isocitrate from oxaloacetate: step 1/2. This chain is Citrate synthase (gltA), found in Rickettsia massiliae.